The chain runs to 212 residues: Riboflavin synthase (212 aa).

Lumazine-binding repeat units follow at residues 1-97 (MFTG…VGGH) and 98-195 (LVSG…VDSV). 2,4-dihydroxypteridine contacts are provided by residues 4–6 (GIV), 48–50 (CLT), 62–67 (DIVEET), 101–103 (GHI), Lys137, 146–148 (SLT), and 160–165 (FLIPET).

As to quaternary structure, homotrimer.

The enzyme catalyses 2 6,7-dimethyl-8-(1-D-ribityl)lumazine + H(+) = 5-amino-6-(D-ribitylamino)uracil + riboflavin. The protein operates within cofactor biosynthesis; riboflavin biosynthesis; riboflavin from 2-hydroxy-3-oxobutyl phosphate and 5-amino-6-(D-ribitylamino)uracil: step 2/2. Its function is as follows. Catalyzes the dismutation of two molecules of 6,7-dimethyl-8-ribityllumazine, resulting in the formation of riboflavin and 5-amino-6-(D-ribitylamino)uracil. The sequence is that of Riboflavin synthase (ribE) from Buchnera aphidicola subsp. Baizongia pistaciae (strain Bp).